The sequence spans 442 residues: Putative FNIP repeat-containing protein L170 (442 aa).

FNIP repeat units lie at residues 213–252, 253–294, and 295–348; these read FNSS…IGRG, FNSE…LGCF, and FNQS…FGMY.

This Acanthamoeba polyphaga mimivirus (APMV) protein is Putative FNIP repeat-containing protein L170.